Reading from the N-terminus, the 275-residue chain is Probable ABC transporter permease protein PH1216 (275 aa).

6 helical membrane passes run 10–30 (LLYI…WSAI), 73–93 (IFTT…GFTI), 105–125 (LLAL…IPLV), 137–157 (ILGL…LLFT), 181–203 (IYTK…YQFT), and 241–261 (IQMA…IALG). An ABC transmembrane type-1 domain is found at 68–260 (ILNSLIFTTF…LPTLLIMIAL (193 aa)).

Belongs to the binding-protein-dependent transport system permease family. MalFG subfamily.

The protein resides in the cell membrane. In terms of biological role, probably part of a binding-protein-dependent transport system PH1214/15/16. Probably responsible for the translocation of the substrate across the membrane. The polypeptide is Probable ABC transporter permease protein PH1216 (Pyrococcus horikoshii (strain ATCC 700860 / DSM 12428 / JCM 9974 / NBRC 100139 / OT-3)).